The sequence spans 200 residues: uncharacterized protein (200 aa).

The 117-residue stretch at 3 to 119 (RLFIAEDQRM…DLADAIRKCV (117 aa)) folds into the Response regulatory domain. D54 is subject to 4-aspartylphosphate. One can recognise an HTH luxR-type domain in the interval 133-198 (MMRDENPLTV…EAASIAEEKG (66 aa)). A DNA-binding region (H-T-H motif) is located at residues 157–176 (TKDITLELYLSQGTVRNYIS).

In terms of processing, phosphorylated by YvfT.

The protein resides in the cytoplasm. Functionally, member of the two-component regulatory system YvfT/YvfU. This is an uncharacterized protein from Bacillus subtilis (strain 168).